Consider the following 374-residue polypeptide: MPRLSQDNQQGHQKHFSRPSRRIQFLPPPWTEAYNVNVHQTVENEGCATAMHNVKLLGSPAAPTLLSLLSGTLSGFARFFALLLRRPPPEAPLRRRDFSALIPALPAAVLSPGHEERPGRLSLLLRAALALPGRPPGGRLPREVDASAGQSSSIPPMGSEWMEMRKRPVCAAQEPTACAPGQPGVENQGSNACCFCWCCCCSCSCLTVRNQEEQRLRRTSYEARTEDLPTCEESPGPTLEEASAWAQSFDKLMLTPAGRNAFREFLRTEFSEENMLFWMACEELKKEANKATIEEKARIIYEDYISILSPKEVSLDSRVRETINRSMAEPSRNIFDDAQLQIYTLMHRDSYPRFMNSALYKDLLRSLSEKAVEA.

Residues 1 to 11 (MPRLSQDNQQG) show a composition bias toward polar residues. Disordered stretches follow at residues 1–21 (MPRLSQDNQQGHQKHFSRPSR) and 135–158 (PPGGRLPREVDASAGQSSSIPPMG). Residues 12-21 (HQKHFSRPSR) are compositionally biased toward basic residues. In terms of domain architecture, RGS spans 248-364 (SFDKLMLTPA…MNSALYKDLL (117 aa)).

As to quaternary structure, forms a complex with G(alpha)z/i2 subunits and mu-opioid receptors; the formation of this complex results in mu-opioid receptor desensitization. Interacts with OPRM1. In terms of processing, fatty acylated. Heavily palmitoylated in the cysteine string motif. Post-translationally, N- and O-glycosylated in synapsomal membranes. Serine phosphorylated in synapsomal membranes. In terms of processing, sumoylated with SUMO1 and SUMO2 in synaptosomes. The sumoylated forms act as a scaffold for sequestering mu-opioid receptor-activated G(alpha) subunits. Retinal-specific. Expressed throughout the retina, including photoreceptors.

The protein localises to the membrane. Its subcellular location is the nucleus. The protein resides in the cytoplasm. Functionally, inhibits signal transduction by increasing the GTPase activity of G protein alpha subunits thereby driving them into their inactive GDP-bound form. Binds selectively to G(z)-alpha and G(alpha)-i2 subunits, accelerates their GTPase activity and regulates their signaling activities. The G(z)-alpha activity is inhibited by the phosphorylation and palmitoylation of the G-protein. Negatively regulates mu-opioid receptor-mediated activation of the G-proteins. The sequence is that of Regulator of G-protein signaling 20 (RGS20) from Bos taurus (Bovine).